Here is a 280-residue protein sequence, read N- to C-terminus: MDENKIIEVAHLKYEYPQASRLALNDLSVSINAGEWVAIIGHNGSGKSTFAKSLNGLLDLQSGDITIDGLPLSIETVWDIRRKIGMVFQNPDNQFVGATVEDDVAFGLENQGIERTEMQRRVQDAVDRVGMTQFMTREPSRLSGGQKQRVALAGIIAQQPEILILDEATSMLDPKGRQEVLETIHTLKQETNMTVLSITHDIDEAASADRIVMLDKGQVIDQGTPAEIFAYGQRLLDLGLDVPYPEKLKAALTKLGVPMPVDYLTTERMVDHLWTLHSKM.

The region spanning Ile-7–Asp-241 is the ABC transporter domain. Position 41-48 (Gly-41–Ser-48) interacts with ATP.

This sequence belongs to the ABC transporter superfamily. Energy-coupling factor EcfA family. Forms a stable energy-coupling factor (ECF) transporter complex composed of 2 membrane-embedded substrate-binding proteins (S component), 2 ATP-binding proteins (A component) and 2 transmembrane proteins (T component).

It is found in the cell membrane. Functionally, ATP-binding (A) component of a common energy-coupling factor (ECF) ABC-transporter complex. Unlike classic ABC transporters this ECF transporter provides the energy necessary to transport a number of different substrates. The sequence is that of Energy-coupling factor transporter ATP-binding protein EcfA1 from Latilactobacillus sakei subsp. sakei (strain 23K) (Lactobacillus sakei subsp. sakei).